Here is a 631-residue protein sequence, read N- to C-terminus: Golgin subfamily A member 8A (631 aa).

Over residues methionine 1–arginine 20 the composition is skewed to basic and acidic residues. 4 disordered regions span residues methionine 1 to alanine 103, lysine 127 to glutamine 154, threonine 426 to glycine 447, and proline 488 to glycine 520. The span at serine 78–leucine 92 shows a compositional bias: low complexity. The span at histidine 93–alanine 103 shows a compositional bias: polar residues. Residues serine 110–glycine 468 are a coiled coil. Positions lysine 128–glutamate 152 are enriched in basic and acidic residues. Gly residues predominate over residues proline 497–glycine 510. The segment at alanine 519 to arginine 631 is golgi-targeting domain.

The protein belongs to the GOLGA8 family.

Its subcellular location is the golgi apparatus. The protein resides in the golgi stack membrane. Its function is as follows. May be involved in maintaining Golgi structure. The sequence is that of Golgin subfamily A member 8A (GOLGA8A) from Homo sapiens (Human).